We begin with the raw amino-acid sequence, 312 residues long: Ribosomal protein uL3 glutamine methyltransferase (312 aa).

It belongs to the protein N5-glutamine methyltransferase family. PrmB subfamily.

The enzyme catalyses L-glutaminyl-[ribosomal protein uL3] + S-adenosyl-L-methionine = N(5)-methyl-L-glutaminyl-[ribosomal protein uL3] + S-adenosyl-L-homocysteine + H(+). Functionally, methylates large ribosomal subunit protein uL3 on a specific glutamine residue. This chain is Ribosomal protein uL3 glutamine methyltransferase, found in Xylella fastidiosa (strain Temecula1 / ATCC 700964).